The chain runs to 405 residues: Solute carrier family 35 member E2A (405 aa).

The disordered stretch occupies residues 1–22 (MSAAAKSQVPEEAAPGCEEEPK). 10 consecutive transmembrane segments (helical) span residues 76-96 (LIYL…NKYI), 106-126 (MLGA…IFVP), 142-162 (FIMT…LGLV), 167-187 (VAVS…VIMS), 195-215 (TGLL…LCTA), 219-241 (SFNI…QNVF), 264-284 (AAAV…PVIG), 296-316 (IVLL…TAYA), 326-346 (FSVA…IVFG), and 347-367 (NKIT…VLLY). Residues 380–405 (SLVTATSRNPEDDTEPLVPQDSRQHH) are disordered.

The protein belongs to the TPT transporter family. SLC35E subfamily.

The protein resides in the membrane. Putative transporter. This chain is Solute carrier family 35 member E2A (Slc35e2a), found in Mus musculus (Mouse).